A 367-amino-acid chain; its full sequence is Ribosomal lysine N-methyltransferase 5 (367 aa).

Residues 55 to 74 (EGGRKKKRVRRRNKASSVEE) are disordered. A compositionally biased stretch (basic residues) spans 58–68 (RKKKRVRRRNK). S-adenosyl-L-methionine-binding positions include Trp-110, 170-172 (GAG), Asp-192, Trp-256, and Met-288.

Belongs to the class I-like SAM-binding methyltransferase superfamily. RKM5 family.

Its function is as follows. S-adenosyl-L-methionine-dependent protein-lysine N-methyltransferase that monomethylates 60S ribosomal protein L1 (RPL1A and RPL1B) at 'Lys-46'. The sequence is that of Ribosomal lysine N-methyltransferase 5 (RKM5) from Saccharomyces cerevisiae (strain Lalvin EC1118 / Prise de mousse) (Baker's yeast).